A 221-amino-acid chain; its full sequence is Sugar transporter SWEET1 (221 aa).

7 consecutive transmembrane segments (helical) span residues 3-23 (AGGV…LGMF), 44-63 (FLPF…YGVL), 68-88 (TLII…LAYL), 102-122 (ATLL…VPDL), 129-149 (LGLF…ADLA), 160-180 (LSFS…IYGF), and 186-206 (YITV…VLFY). The region spanning 10–94 (FLSSACVLFT…LAYLHYSPQK (85 aa)) is the MtN3/slv 1 domain. A MtN3/slv 2 domain is found at 127-212 (QQLGLFCSVF…VLFYKYPPEQ (86 aa)). Residues 149–221 (AKIIQTKSTQ…QDTKYRLLQT (73 aa)) form a mediates interaction with TRPV2 region.

Belongs to the SWEET sugar transporter family. As to quaternary structure, interacts with TRPV2; the interaction probably occurs intracellularly and depends on TRPV2 N-glycosylation.

Its subcellular location is the golgi apparatus membrane. It is found in the cell membrane. Mediates sugar transport across membranes. May stimulate V(D)J recombination by the activation of RAG1. The polypeptide is Sugar transporter SWEET1 (Slc50a1) (Rattus norvegicus (Rat)).